Reading from the N-terminus, the 331-residue chain is MRTMLTCVARSALRQTSMSAPARACFSASAPALSSRSRNYSKQQQQQPVARTGLKDLHPLPESMREQLESSDTPQEPYTASGNSNDPAVHSSRPASQPAEPEVSPRVAAPGLVNGSSSKNGSPSSASSNGASSSGASSSGTYSSGNASIPISNISEAWGTSFAGLGERSFSKEAIDVLMAPINEADVEIKPDGLIYLPEIKYRRILNKAFGPGGWGMAPRSETNVGQGIVSREWVLICQGRFVATARGEQEFFKPSGVPTASEGAKSNALMRCCKDLGVSSELWDPRFIRQFRKKHCIEVWAQDTAGKKKKLWRRKDDPPFEYPWKETGTA.

Residues 1–40 (MRTMLTCVARSALRQTSMSAPARACFSASAPALSSRSRNY) constitute a mitochondrion transit peptide. Disordered stretches follow at residues 32 to 143 (ALSS…GTYS) and 312 to 331 (LWRR…TGTA). Positions 40 to 49 (YSKQQQQQPV) are enriched in polar residues. Over residues 53–68 (GLKDLHPLPESMREQL) the composition is skewed to basic and acidic residues. The span at 70 to 86 (SSDTPQEPYTASGNSND) shows a compositional bias: polar residues. Residues 114-143 (NGSSSKNGSPSSASSNGASSSGASSSGTYS) are compositionally biased toward low complexity.

It belongs to the MGM101 family.

It is found in the mitochondrion matrix. The protein localises to the mitochondrion nucleoid. Performs an essential function in the repair of oxidatively damaged mtDNA that is required for the maintenance of the mitochondrial genome. Binds to DNA. In Mycosarcoma maydis (Corn smut fungus), this protein is Mitochondrial genome maintenance protein MGM101 (MGM101).